A 59-amino-acid chain; its full sequence is Large ribosomal subunit protein bL33 (59 aa).

This sequence belongs to the bacterial ribosomal protein bL33 family.

The chain is Large ribosomal subunit protein bL33 from Borreliella afzelii (strain PKo) (Borrelia afzelii).